Consider the following 310-residue polypeptide: MKGQQKTAETEEGTVQIQEGAVATGEDPTSVAIASIQSAATFPDPNVKYVFRTENGGQVMYRVIQVSEGQLDGQTEGSGAISGYPATQSMTQAVIQGAFTSDDAVDTEGAAAETHYTYFPSTAVGDGSGGTTSGSTTAVVTTQGSEALLGQATPPSTGQFFVMMSPQEVLQGGSQRSIAPRTHPYSPKSEAPRTTRDEKRRAQHNEVERRRRDKINNWIVQLSKIIPDCSMESTKSGQSKGGILSKACDYIQELRQSNHRLSEELQGLDQLQLDNDVLRQQVEDLKNKNLLLRAQLRHHGLEVVIKNDSN.

Residues 1–17 show a composition bias toward polar residues; it reads MKGQQKTAETEEGTVQI. Disordered stretches follow at residues 1–26 and 171–209; these read MKGQ…ATGE and QGGS…EVER. The segment covering 190-209 has biased composition (basic and acidic residues); it reads EAPRTTRDEKRRAQHNEVER. Positions 199 to 254 constitute a bHLH domain; it reads KRRAQHNEVERRRRDKINNWIVQLSKIIPDCSMESTKSGQSKGGILSKACDYIQEL. A leucine-zipper region spans residues 271–292; it reads LQLDNDVLRQQVEDLKNKNLLL. Lys-306 is covalently cross-linked (Glycyl lysine isopeptide (Lys-Gly) (interchain with G-Cter in SUMO2)).

As to quaternary structure, efficient DNA binding requires dimerization with another bHLH protein. Binds DNA as a homodimer or a heterodimer (USF1/USF2).

The protein localises to the nucleus. In terms of biological role, transcription factor that binds to a symmetrical DNA sequence (E-boxes) (5'-CACGTG-3') that is found in a variety of viral and cellular promoters. The sequence is that of Upstream stimulatory factor 1 (Usf1) from Mus musculus (Mouse).